The following is a 758-amino-acid chain: POU domain, class 2, transcription factor 1 (758 aa).

Composition is skewed to polar residues over residues 1 to 10, 19 to 30, and 275 to 285; these read MKLHSSSKIQ, RMNNPSETSKSP, and VQQLPQSQTTP. Disordered stretches follow at residues 1 to 43, 271 to 296, 377 to 398, 450 to 472, and 534 to 573; these read MKLH…QTNG, AATP…LEEP, TNQS…RRKK, EKRI…LFSS, and SVLT…MTSS. One can recognise a POU-specific domain in the interval 294–368; it reads EEPSDLEELE…LLEKWLNDAE (75 aa). Positions 395–454 form a DNA-binding region, homeobox; the sequence is RRKKRTSIETNIRVALEKSFLENQKPTSEEITMIADQLNMEKEVIRVWFCNRRQKEKRIN. Low complexity predominate over residues 455 to 472; sequence PPSSGGSSSSPIKSLFSS.

The protein belongs to the POU transcription factor family. Class-2 subfamily. Expressed in oocytes (at protein level). Expressed in the tadpole brain (at protein level).

The protein localises to the cytoplasm. The protein resides in the nucleus. Its function is as follows. Transcription factor that binds to the octamer motif (5'-ATTTGCAT-3') and activates the promoters of the genes of some small nuclear RNAs (snRNA) and histone H2B. In vitro does not bind to variant octamer sequences, such as the H2B octamer 5'-GTTTGCAT-3', although binding has been observed in vivo during early embryogenesis, suggesting that interactions between pou2f1 and other factors might be required for octamer-dependent H2B transcription. Acts downstream of Notch signaling during radial glia formation. May be important for gastrulation, possibly through the regulation of an FGF-type signaling pathway. This chain is POU domain, class 2, transcription factor 1 (pou2f1), found in Xenopus laevis (African clawed frog).